The chain runs to 173 residues: Thiol-disulfide oxidoreductase ResA (173 aa).

A helical; Signal-anchor for type II membrane protein membrane pass occupies residues Val10–Phe29. In terms of domain architecture, Thioredoxin spans Met35–Pro173. Cysteines 73 and 76 form a disulfide.

It belongs to the thioredoxin family. ResA subfamily.

The protein localises to the cell membrane. It participates in protein modification; cytochrome c assembly. In terms of biological role, thiol-disulfide oxidoreductase which is required in disulfide reduction during c-type cytochrome synthesis. May accept reducing equivalents from CcdA, leading to breakage of disulfide bonds in apocytochrome c; following this reduction heme can be covalently attached. The protein is Thiol-disulfide oxidoreductase ResA of Bacillus thuringiensis (strain Al Hakam).